Here is a 413-residue protein sequence, read N- to C-terminus: ATP-dependent RNA helicase RhlB (413 aa).

Residues 9 to 37 (QRFADLPLHPQILAALNDQNFEYCTPIQA) carry the Q motif motif. A Helicase ATP-binding domain is found at 40 to 217 (LPLTLQGKDV…FEDMNDPEYI (178 aa)). Position 53-60 (53-60 (AQTGTGKT)) interacts with ATP. The DEAD box signature appears at 163 to 166 (DEAD). The region spanning 241–388 (KMALLMTLLE…VSQYDPDSLI (148 aa)) is the Helicase C-terminal domain.

Belongs to the DEAD box helicase family. RhlB subfamily. In terms of assembly, component of the RNA degradosome, which is a multiprotein complex involved in RNA processing and mRNA degradation.

Its subcellular location is the cytoplasm. The catalysed reaction is ATP + H2O = ADP + phosphate + H(+). In terms of biological role, DEAD-box RNA helicase involved in RNA degradation. Has RNA-dependent ATPase activity and unwinds double-stranded RNA. This is ATP-dependent RNA helicase RhlB from Actinobacillus succinogenes (strain ATCC 55618 / DSM 22257 / CCUG 43843 / 130Z).